Here is a 442-residue protein sequence, read N- to C-terminus: UDP-N-acetylmuramoylalanine--D-glutamate ligase (442 aa).

Residue 113–119 (GSNGKTT) participates in ATP binding.

The protein belongs to the MurCDEF family.

The protein localises to the cytoplasm. The catalysed reaction is UDP-N-acetyl-alpha-D-muramoyl-L-alanine + D-glutamate + ATP = UDP-N-acetyl-alpha-D-muramoyl-L-alanyl-D-glutamate + ADP + phosphate + H(+). It functions in the pathway cell wall biogenesis; peptidoglycan biosynthesis. Cell wall formation. Catalyzes the addition of glutamate to the nucleotide precursor UDP-N-acetylmuramoyl-L-alanine (UMA). This is UDP-N-acetylmuramoylalanine--D-glutamate ligase from Coxiella burnetii (strain CbuG_Q212) (Coxiella burnetii (strain Q212)).